The following is a 725-amino-acid chain: Ophiobolin F synthase (725 aa).

The tract at residues methionine 1 to glutamate 322 is (7Z)-ophiobola-7,19-dien-3-ol synthase. Mg(2+)-binding residues include aspartate 93 and aspartate 97. Aspartate 93 is a binding site for substrate. The DDXXD 1 signature appears at aspartate 93–aspartate 97. Residues arginine 182–aspartate 185, asparagine 226, serine 230–glutamate 234, and arginine 313–tyrosine 314 each bind substrate. The NSE/DTE motif lies at asparagine 226–glutamate 234. Residues leucine 323–valine 725 are geranylfarnesyl diphosphate synthase. The interval glycine 362–isoleucine 388 is disordered. Positions serine 373 to arginine 382 are enriched in basic and acidic residues. Lysine 436, arginine 439, and histidine 468 together coordinate isopentenyl diphosphate. Mg(2+)-binding residues include aspartate 475 and aspartate 479. Residues aspartate 475–aspartate 479 carry the DDXXD 2 motif. Arginine 484 provides a ligand contact to dimethylallyl diphosphate. Isopentenyl diphosphate is bound at residue arginine 485. The dimethylallyl diphosphate site is built by lysine 562, threonine 563, glutamine 601, asparagine 608, lysine 618, and lysine 628.

The protein in the N-terminal section; belongs to the terpene synthase family. This sequence in the C-terminal section; belongs to the FPP/GGPP synthase family. It depends on Mg(2+) as a cofactor.

It catalyses the reaction isopentenyl diphosphate + (2E,6E)-farnesyl diphosphate = (2E,6E,10E)-geranylgeranyl diphosphate + diphosphate. The enzyme catalyses isopentenyl diphosphate + (2E,6E,10E)-geranylgeranyl diphosphate = (2E,6E,10E,14E)-geranylfarnesyl diphosphate + diphosphate. It carries out the reaction (2E,6E,10E,14E)-geranylfarnesyl diphosphate + H2O = ophiobolin F + diphosphate. It functions in the pathway secondary metabolite biosynthesis; terpenoid biosynthesis. Functionally, bifunctional sesterterpene synthase that converts isopentenyl diphosphate (IPP) and dimethylallyl diphosphate (DMAPP) into ophiobolin F. The C-terminal prenyltransferase (PT) domain of AcldOS converts isopentenyl diphosphate and dimethylallyl diphosphate into geranylfarnesyl diphosphate (GFPP), whereas the N-terminal terpene cyclase (TC) domain catalyzes the cyclization of GFPP to ophiobolin F. The chain is Ophiobolin F synthase from Aspergillus calidoustus.